A 284-amino-acid polypeptide reads, in one-letter code: Bifunctional protein FolD (284 aa).

NADP(+)-binding positions include 165 to 167 (GRS) and Ser-190.

Belongs to the tetrahydrofolate dehydrogenase/cyclohydrolase family. As to quaternary structure, homodimer.

It catalyses the reaction (6R)-5,10-methylene-5,6,7,8-tetrahydrofolate + NADP(+) = (6R)-5,10-methenyltetrahydrofolate + NADPH. The enzyme catalyses (6R)-5,10-methenyltetrahydrofolate + H2O = (6R)-10-formyltetrahydrofolate + H(+). The protein operates within one-carbon metabolism; tetrahydrofolate interconversion. In terms of biological role, catalyzes the oxidation of 5,10-methylenetetrahydrofolate to 5,10-methenyltetrahydrofolate and then the hydrolysis of 5,10-methenyltetrahydrofolate to 10-formyltetrahydrofolate. This chain is Bifunctional protein FolD, found in Streptococcus mutans serotype c (strain ATCC 700610 / UA159).